The chain runs to 308 residues: MPYTFENSEALLKNLKDAAPYISAAERFASFKGFVYDKRINIACTSEKLARAGFYSTASPEFPASAKCPFCMLEINFEQCDDPWEKHKSGSPHCEFVMIGEIEESELSFRIISNLAIRHATVRLYEELLGIVATLENGDIANENPITRADATRKLISFRSSSKLLTFDHRLATFQNFIFDKKRNVKCTSKKLAKAGWFSIANKKDKTSAKCPFCLVELDFDESDDPWEEHQKFSASCDFIKLGKLDEKKWTENEALMLGARITIMQKYEKGSWLIDELEKENRIDEIIKIRKIMIKPNHVLKRRRCSI.

BIR repeat units follow at residues 27-98 (RFAS…EFVM) and 170-241 (RLAT…DFIK). Positions 68, 71, 87, 94, 211, 214, 230, and 237 each coordinate Zn(2+).

Belongs to the IAP family.

The protein is Baculoviral IAP repeat-containing protein bir-2 of Caenorhabditis elegans.